The primary structure comprises 128 residues: MNIRATRVGEQMKKELSDIIGRKLKDPRIGFVTVTDVRVTGDLQQAKVYISVFGDDEQRENTLKALEKAKGFIRSEIGQRIRLRKTPEILFEIDETIEYGSRIERLIRQISDEDGRDSEEVNDEPKNG.

It belongs to the RbfA family. As to quaternary structure, monomer. Binds 30S ribosomal subunits, but not 50S ribosomal subunits or 70S ribosomes.

The protein resides in the cytoplasm. One of several proteins that assist in the late maturation steps of the functional core of the 30S ribosomal subunit. Associates with free 30S ribosomal subunits (but not with 30S subunits that are part of 70S ribosomes or polysomes). Required for efficient processing of 16S rRNA. May interact with the 5'-terminal helix region of 16S rRNA. In Geobacillus thermodenitrificans (strain NG80-2), this protein is Ribosome-binding factor A.